The primary structure comprises 166 residues: Interferon gamma (166 aa).

The first 23 residues, 1–23 (MKYTSYILAFQLCVVLGSLGCYC), serve as a signal peptide directing secretion. Residue glutamine 24 is modified to Pyrrolidone carboxylic acid. Residues asparagine 48, asparagine 86, and asparagine 120 are each glycosylated (N-linked (GlcNAc...) asparagine).

This sequence belongs to the type II (or gamma) interferon family. Homodimer. Interacts with IFNGR1 (via extracellular domain); this interaction promotes IFNGR1 dimerization. In terms of tissue distribution, released primarily from activated T lymphocytes.

It localises to the secreted. In terms of biological role, type II interferon produced by immune cells such as T-cells and NK cells that plays crucial roles in antimicrobial, antiviral, and antitumor responses by activating effector immune cells and enhancing antigen presentation. Primarily signals through the JAK-STAT pathway after interaction with its receptor IFNGR1 to affect gene regulation. Upon IFNG binding, IFNGR1 intracellular domain opens out to allow association of downstream signaling components JAK2, JAK1 and STAT1, leading to STAT1 activation, nuclear translocation and transcription of IFNG-regulated genes. Many of the induced genes are transcription factors such as IRF1 that are able to further drive regulation of a next wave of transcription. Plays a role in class I antigen presentation pathway by inducing a replacement of catalytic proteasome subunits with immunoproteasome subunits. In turn, increases the quantity, quality, and repertoire of peptides for class I MHC loading. Increases the efficiency of peptide generation also by inducing the expression of activator PA28 that associates with the proteasome and alters its proteolytic cleavage preference. Up-regulates as well MHC II complexes on the cell surface by promoting expression of several key molecules such as cathepsins B/CTSB, H/CTSH, and L/CTSL. Participates in the regulation of hematopoietic stem cells during development and under homeostatic conditions by affecting their development, quiescence, and differentiation. The polypeptide is Interferon gamma (IFNG) (Callithrix jacchus (White-tufted-ear marmoset)).